The primary structure comprises 237 residues: Zinc finger AN1 domain-containing stress-associated protein 14 (237 aa).

The disordered stretch occupies residues 1-31; sequence MATKRKCPANGDDGGVADLEPVAGGSFASPP. The AN1-type zinc-finger motif lies at 171–217; it reads QPEANRCATCRRKVGLTGFKCRCGGTFCGGHRYADEHGCGFDYKSSG. Residues Cys177, Cys180, Cys191, Cys193, Cys198, His201, His207, and Cys209 each coordinate Zn(2+).

In terms of biological role, may be involved in environmental stress response. The polypeptide is Zinc finger AN1 domain-containing stress-associated protein 14 (SAP14) (Oryza sativa subsp. japonica (Rice)).